A 143-amino-acid chain; its full sequence is Large ribosomal subunit protein uL11 (143 aa).

The protein belongs to the universal ribosomal protein uL11 family. In terms of assembly, part of the ribosomal stalk of the 50S ribosomal subunit. Interacts with L10 and the large rRNA to form the base of the stalk. L10 forms an elongated spine to which L12 dimers bind in a sequential fashion forming a multimeric L10(L12)X complex. One or more lysine residues are methylated.

Its function is as follows. Forms part of the ribosomal stalk which helps the ribosome interact with GTP-bound translation factors. The sequence is that of Large ribosomal subunit protein uL11 from Aromatoleum aromaticum (strain DSM 19018 / LMG 30748 / EbN1) (Azoarcus sp. (strain EbN1)).